Reading from the N-terminus, the 131-residue chain is Large ribosomal subunit protein bL17 (131 aa).

The protein belongs to the bacterial ribosomal protein bL17 family. As to quaternary structure, part of the 50S ribosomal subunit. Contacts protein L32.

This is Large ribosomal subunit protein bL17 from Shewanella sp. (strain ANA-3).